Consider the following 201-residue polypeptide: dITP/XTP pyrophosphatase (201 aa).

8-13 is a binding site for substrate; the sequence is TTNENK. The Proton acceptor role is filled by Asp-68. Asp-68 provides a ligand contact to Mg(2+). Residues Ser-69, 155 to 158, Lys-177, and 182 to 183 each bind substrate; these read FGYD and HR.

This sequence belongs to the HAM1 NTPase family. In terms of assembly, homodimer. It depends on Mg(2+) as a cofactor.

The enzyme catalyses XTP + H2O = XMP + diphosphate + H(+). The catalysed reaction is dITP + H2O = dIMP + diphosphate + H(+). It carries out the reaction ITP + H2O = IMP + diphosphate + H(+). Pyrophosphatase that catalyzes the hydrolysis of nucleoside triphosphates to their monophosphate derivatives, with a high preference for the non-canonical purine nucleotides XTP (xanthosine triphosphate), dITP (deoxyinosine triphosphate) and ITP. Seems to function as a house-cleaning enzyme that removes non-canonical purine nucleotides from the nucleotide pool, thus preventing their incorporation into DNA/RNA and avoiding chromosomal lesions. This Borreliella burgdorferi (strain ATCC 35210 / DSM 4680 / CIP 102532 / B31) (Borrelia burgdorferi) protein is dITP/XTP pyrophosphatase.